The sequence spans 206 residues: Dephospho-CoA kinase (206 aa).

The DPCK domain maps to 4-204 (IVGLTGGIGS…HQYLQLANAQ (201 aa)). 12-17 (GSGKST) contributes to the ATP binding site.

This sequence belongs to the CoaE family.

It localises to the cytoplasm. It carries out the reaction 3'-dephospho-CoA + ATP = ADP + CoA + H(+). Its pathway is cofactor biosynthesis; coenzyme A biosynthesis; CoA from (R)-pantothenate: step 5/5. Its function is as follows. Catalyzes the phosphorylation of the 3'-hydroxyl group of dephosphocoenzyme A to form coenzyme A. This Pasteurella multocida (strain Pm70) protein is Dephospho-CoA kinase.